We begin with the raw amino-acid sequence, 244 residues long: Ribosomal RNA large subunit methyltransferase E (244 aa).

A disordered region spans residues 1–23 (MATGGKKSAGRTTGSGPAGGSRN). Residues Gly-91, Trp-93, Asp-116, Asp-132, and Asp-156 each coordinate S-adenosyl-L-methionine. Lys-196 acts as the Proton acceptor in catalysis.

This sequence belongs to the class I-like SAM-binding methyltransferase superfamily. RNA methyltransferase RlmE family.

The protein localises to the cytoplasm. It catalyses the reaction uridine(2552) in 23S rRNA + S-adenosyl-L-methionine = 2'-O-methyluridine(2552) in 23S rRNA + S-adenosyl-L-homocysteine + H(+). Functionally, specifically methylates the uridine in position 2552 of 23S rRNA at the 2'-O position of the ribose in the fully assembled 50S ribosomal subunit. The polypeptide is Ribosomal RNA large subunit methyltransferase E (Paramagnetospirillum magneticum (strain ATCC 700264 / AMB-1) (Magnetospirillum magneticum)).